The primary structure comprises 238 residues: Tetraspanin-4 (238 aa).

At 1–13 (MARGCLQGVKYLM) the chain is on the cytoplasmic side. The chain crosses the membrane as a helical span at residues 14–34 (FAFNLLFWLGGCGVLGVGIWL). The Extracellular segment spans residues 35 to 55 (AATQGNFATLSSSFPSLSAAN). A helical membrane pass occupies residues 56-76 (LLIVTGTFVMAIGFVGCIGAL). The Cytoplasmic portion of the chain corresponds to 77–85 (KENKCLLLT). A helical transmembrane segment spans residues 86 to 106 (FFVLLLLVFLLEATIAVLFFA). The Extracellular portion of the chain corresponds to 107-201 (YSDKIDSYAQ…ETVKAWLQEN (95 aa)). 2 N-linked (GlcNAc...) asparagine glycosylation sites follow: Asn152 and Asn161. A helical membrane pass occupies residues 202–222 (LLAVGIFGLCTALVQILGLTF). At 223–238 (AMTMYCQVVKADTYCA) the chain is on the cytoplasmic side.

This sequence belongs to the tetraspanin (TM4SF) family. As to quaternary structure, forms a complex with integrins.

The protein localises to the membrane. The polypeptide is Tetraspanin-4 (Tspan4) (Mus musculus (Mouse)).